The chain runs to 276 residues: Ribosomal RNA small subunit methyltransferase A (276 aa).

The S-adenosyl-L-methionine site is built by Asn-27, Leu-29, Gly-54, Glu-75, Asp-101, and Asn-123.

This sequence belongs to the class I-like SAM-binding methyltransferase superfamily. rRNA adenine N(6)-methyltransferase family. RsmA subfamily.

Its subcellular location is the cytoplasm. The enzyme catalyses adenosine(1518)/adenosine(1519) in 16S rRNA + 4 S-adenosyl-L-methionine = N(6)-dimethyladenosine(1518)/N(6)-dimethyladenosine(1519) in 16S rRNA + 4 S-adenosyl-L-homocysteine + 4 H(+). Its function is as follows. Specifically dimethylates two adjacent adenosines (A1518 and A1519) in the loop of a conserved hairpin near the 3'-end of 16S rRNA in the 30S particle. May play a critical role in biogenesis of 30S subunits. The chain is Ribosomal RNA small subunit methyltransferase A from Bartonella henselae (strain ATCC 49882 / DSM 28221 / CCUG 30454 / Houston 1) (Rochalimaea henselae).